A 96-amino-acid polypeptide reads, in one-letter code: MNLRPLHDRVIVKRVENETKTASGIVIPDSAAEKPDQGEVLAVGPGKKNDKGELGAMAVKVGDRVLFGKYSGQTVKVDGDELLVMKEEDLFAVVEK.

It belongs to the GroES chaperonin family. In terms of assembly, heptamer of 7 subunits arranged in a ring. Interacts with the chaperonin GroEL.

It is found in the cytoplasm. Its function is as follows. Together with the chaperonin GroEL, plays an essential role in assisting protein folding. The GroEL-GroES system forms a nano-cage that allows encapsulation of the non-native substrate proteins and provides a physical environment optimized to promote and accelerate protein folding. GroES binds to the apical surface of the GroEL ring, thereby capping the opening of the GroEL channel. This is Co-chaperonin GroES from Polaromonas naphthalenivorans (strain CJ2).